Here is a 429-residue protein sequence, read N- to C-terminus: Glutamate-1-semialdehyde 2,1-aminomutase 2 (429 aa).

N6-(pyridoxal phosphate)lysine is present on lysine 268.

It belongs to the class-III pyridoxal-phosphate-dependent aminotransferase family. HemL subfamily. Homodimer. The cofactor is pyridoxal 5'-phosphate.

It localises to the cytoplasm. The enzyme catalyses (S)-4-amino-5-oxopentanoate = 5-aminolevulinate. It participates in porphyrin-containing compound metabolism; protoporphyrin-IX biosynthesis; 5-aminolevulinate from L-glutamyl-tRNA(Glu): step 2/2. The sequence is that of Glutamate-1-semialdehyde 2,1-aminomutase 2 from Bacillus cereus (strain AH187).